Reading from the N-terminus, the 494-residue chain is Hepatic triacylglycerol lipase (494 aa).

An N-terminal signal peptide occupies residues 1-21; it reads MGNHLQISVSLVLCIFIQSSA. Asn79 is a glycosylation site (N-linked (GlcNAc...) asparagine). Residue Ser169 is the Nucleophile of the active site. Asp195 (charge relay system) is an active-site residue. Residues 255–278 form an essential for determining substrate specificity region; sequence CHFLELYKHIAEHGLNAITQTINC. His280 (charge relay system) is an active-site residue. A PLAT domain is found at 353–487; sequence YHYQFKIQFI…HPTQEKVFVK (135 aa). N-linked (GlcNAc...) asparagine glycosylation is present at Asn398.

The protein belongs to the AB hydrolase superfamily. Lipase family. In terms of assembly, homodimer.

It is found in the secreted. It catalyses the reaction a triacylglycerol + H2O = a diacylglycerol + a fatty acid + H(+). The enzyme catalyses a 1-acyl-sn-glycero-3-phosphocholine + H2O = sn-glycerol 3-phosphocholine + a fatty acid + H(+). It carries out the reaction a 1,2-diacyl-sn-glycero-3-phosphocholine + H2O = a 2-acyl-sn-glycero-3-phosphocholine + a fatty acid + H(+). The catalysed reaction is 1,2-di-(9Z-octadecenoyl)-sn-glycerol + H2O = 2-(9Z-octadecenoyl)-glycerol + (9Z)-octadecenoate + H(+). It catalyses the reaction 1,2,3-tri-(9Z-octadecenoyl)-glycerol + H2O = 2,3-di-(9Z)-octadecenoyl-sn-glycerol + (9Z)-octadecenoate + H(+). The enzyme catalyses 1-(9Z-octadecenoyl)-sn-glycero-3-phospho-L-serine + H2O = sn-glycero-3-phospho-L-serine + (9Z)-octadecenoate + H(+). It carries out the reaction 1-hexadecanoyl-sn-glycero-3-phosphocholine + H2O = sn-glycerol 3-phosphocholine + hexadecanoate + H(+). The catalysed reaction is 1,3-di-(9Z-octadecenoyl)-glycerol + H2O = 3-(9Z-octadecenoyl)-sn-glycerol + (9Z)-octadecenoate + H(+). It catalyses the reaction 1,2,3-tri-(9Z-octadecenoyl)-glycerol + H2O = di-(9Z)-octadecenoylglycerol + (9Z)-octadecenoate + H(+). The enzyme catalyses 1,2-di-(9Z-octadecenoyl)-sn-glycero-3-phosphocholine + H2O = (9Z-octadecenoyl)-sn-glycero-3-phosphocholine + (9Z)-octadecenoate + H(+). It carries out the reaction 1,2,3-tributanoylglycerol + H2O = dibutanoylglycerol + butanoate + H(+). The catalysed reaction is 1,2-dihexadecanoyl-sn-glycero-3-phosphocholine + H2O = hexadecanoyl-sn-glycero-3-phosphocholine + hexadecanoate + H(+). Phospholipase A1 and lysophospholipase activities are inhibited by annexin II. Its function is as follows. Catalyzes the hydrolysis of triglycerides and phospholipids present in circulating plasma lipoproteins, including chylomicrons, intermediate density lipoproteins (IDL), low density lipoproteins (LDL) of large size and high density lipoproteins (HDL), releasing free fatty acids (FFA) and smaller lipoprotein particles. Also exhibits lysophospholipase activity. Can hydrolyze both neutral lipid and phospholipid substrates but shows a greater binding affinity for neutral lipid substrates than phospholipid substrates. In native LDL, preferentially hydrolyzes the phosphatidylcholine species containing polyunsaturated fatty acids at sn-2 position. This Rattus norvegicus (Rat) protein is Hepatic triacylglycerol lipase (Lipc).